Reading from the N-terminus, the 319-residue chain is RNA exonuclease 4 (319 aa).

The interval 1-75 (MAALSSNWKK…GGVHSSKIEE (75 aa)) is disordered. The Exonuclease domain maps to 132-293 (KYIAIDCEMV…FRKHKSAFDV (162 aa)). Positions 295–319 (HANRYAPKTASGGGQKGNKPKKKKK) are disordered.

This sequence belongs to the REXO4 family.

It is found in the nucleus. In terms of biological role, exoribonuclease involved in ribosome biosynthesis. Involved in the processing of ITS1, the internal transcribed spacer localized between the 18S and 5.8S rRNAs. The polypeptide is RNA exonuclease 4 (REX4) (Gibberella zeae (strain ATCC MYA-4620 / CBS 123657 / FGSC 9075 / NRRL 31084 / PH-1) (Wheat head blight fungus)).